The following is a 738-amino-acid chain: Nucleoprotein (738 aa).

Residues 334 to 363 (VNVGEQYQQLREAATEAEKQLQQYAETREL) adopt a coiled-coil conformation. The interval 418 to 640 (GDRYPDDNDI…QGSESEALPI (223 aa)) is disordered. The segment covering 461 to 476 (PYDDESNNYPDYEDSA) has biased composition (acidic residues). The span at 544 to 564 (PGSNTNQPQGNMSSTLQSMTP) shows a compositional bias: polar residues. Residues 567–594 (EESEPDDQKDDDDESLTSLDSEGDEDVE) show a composition bias toward acidic residues. Polar residues predominate over residues 616–625 (VDTNQQNGPS).

It belongs to the filoviruses nucleoprotein family. Homooligomer. Homomultimerizes to form the nucleocapsid. Binds to viral genomic RNA. Interacts with VP35 and VP30 to form the nucleocapsid. Interacts with host PPP2R5C; this interaction leads to VP30 dephosphorylation and viral transcription. Interacts with VP24; this interaction facilitates nucleocapsid assembly and genome packaging. Interacts with matrix protein VP40; this interaction allows recruitment of the nucleocapsid into progeny virions. Interacts with host STAU1. Interacts with host NXF1 (via RNA-binding domain); this interaction recruits NXF1 to the inclusion bodies were viral replication takes place, probably to export viral mRNA-NXF1 complexes from these sites. Interacts with host CCDC92; this interaction sequesters NP in the host cytoplasm. Interacts with host TRIM14. Phosphorylated and O-glycosylated by host. Acetylated by host EP300 in vitro.

The protein localises to the virion. Its subcellular location is the host cytoplasm. In terms of biological role, oligomerizes into helical capsid to encapsidate the viral genome, protecting it from nucleases and the cellular innate immune response. VP35 binds to and stabilizes monomeric NP, keeping it soluble. Upon virus replication, NP is recruited to bind cooperatively viral genomic RNA and VP35 is released. The encapsidated genomic RNA is termed the nucleocapsid and serves as template for transcription and replication. The nucleocapsid is helical with a pitch of 10.81 NP per turn and a diameter of about 22nm. Each NP binds to six nucleotides of viral genomic RNA, three being exposed to the solvant and three hidden into the nucleocapsid. Also recruits host PPP2R5C phosphatase to dephosphorylate VP30 and thereby promote viral transcription. Upon virion assembly and budding, NP binds to VP24 and possibly host STAU1. The protein is Nucleoprotein (NP) of Sudan ebolavirus (strain Human/Uganda/Gulu/2000) (SEBOV).